The sequence spans 208 residues: Uracil phosphoribosyltransferase (208 aa).

5-phospho-alpha-D-ribose 1-diphosphate contacts are provided by residues Arg-78, Arg-103, and 130–138; that span reads DPMLATGGS. Residues Ile-193 and 198-200 each bind uracil; that span reads GDA. Asp-199 contacts 5-phospho-alpha-D-ribose 1-diphosphate.

It belongs to the UPRTase family. The cofactor is Mg(2+).

It carries out the reaction UMP + diphosphate = 5-phospho-alpha-D-ribose 1-diphosphate + uracil. Its pathway is pyrimidine metabolism; UMP biosynthesis via salvage pathway; UMP from uracil: step 1/1. Allosterically activated by GTP. In terms of biological role, catalyzes the conversion of uracil and 5-phospho-alpha-D-ribose 1-diphosphate (PRPP) to UMP and diphosphate. The chain is Uracil phosphoribosyltransferase from Shewanella frigidimarina (strain NCIMB 400).